The chain runs to 131 residues: uncharacterized protein (131 aa).

This is an uncharacterized protein from Methanocaldococcus jannaschii (strain ATCC 43067 / DSM 2661 / JAL-1 / JCM 10045 / NBRC 100440) (Methanococcus jannaschii).